The primary structure comprises 154 residues: Transcriptional repressor NrdR (154 aa).

A zinc finger lies at 3–34; that stretch reads CPFCGANDTKVIDSRLVAEGEQVRRRRECVAC. One can recognise an ATP-cone domain in the interval 49–139; the sequence is PRLIKQDGTR…VYRRFQDLDE (91 aa).

Belongs to the NrdR family. Zn(2+) is required as a cofactor.

Negatively regulates transcription of bacterial ribonucleotide reductase nrd genes and operons by binding to NrdR-boxes. This is Transcriptional repressor NrdR from Pseudomonas putida (strain ATCC 700007 / DSM 6899 / JCM 31910 / BCRC 17059 / LMG 24140 / F1).